Reading from the N-terminus, the 463-residue chain is MKKILVIGDLIADYYLWGKSERLSPEAPVPVLEVKKESKNLGGAANVANNLTSLKAKVFLCGVVGDDLEGKHFISTLKTRGIDTSGVLIDKTRCTTLKTRIIAQNQQIVRVDKEIKDPLNADLRKNLLDFIAEKIQEIDGVILSDYNKGVLDFELTQTIITLANKHHKLILCDPKGKDYSKYSHASLITPNRAELEQALHLKLDSHANLSKALQILQETYHIAMPLVTLSEQGIAFLEKGELVNCPTIAKEVYDVTGAGDTVIASLTLSLLESKSLKEACEFANAAAAVVVGKMGSALASLEEIALILNQTHPKILPLEKLLETLERNQQKIVFTNGCFDILHKGHASYLQKAKALGDILVVGLNSDNSIKRLKGDKRPIVSEKDRAFLLASLSCVDYVVVFGEDTPIKLIQALKPDILVKGADYLNKEVIGSELAKETRLIEFEEGYSTSAIIEKIKRTHND.

The segment at 1 to 315 is ribokinase; that stretch reads MKKILVIGDL…LILNQTHPKI (315 aa). Residue 191–194 participates in ATP binding; sequence NRAE. Asp-260 is a catalytic residue. The tract at residues 334-463 is cytidylyltransferase; it reads FTNGCFDILH…IEKIKRTHND (130 aa).

It in the N-terminal section; belongs to the carbohydrate kinase PfkB family. The protein in the C-terminal section; belongs to the cytidylyltransferase family. Homodimer.

It carries out the reaction D-glycero-beta-D-manno-heptose 7-phosphate + ATP = D-glycero-beta-D-manno-heptose 1,7-bisphosphate + ADP + H(+). The enzyme catalyses D-glycero-beta-D-manno-heptose 1-phosphate + ATP + H(+) = ADP-D-glycero-beta-D-manno-heptose + diphosphate. The protein operates within nucleotide-sugar biosynthesis; ADP-L-glycero-beta-D-manno-heptose biosynthesis; ADP-L-glycero-beta-D-manno-heptose from D-glycero-beta-D-manno-heptose 7-phosphate: step 1/4. Its pathway is nucleotide-sugar biosynthesis; ADP-L-glycero-beta-D-manno-heptose biosynthesis; ADP-L-glycero-beta-D-manno-heptose from D-glycero-beta-D-manno-heptose 7-phosphate: step 3/4. It functions in the pathway bacterial outer membrane biogenesis; LPS core biosynthesis. Its function is as follows. Catalyzes the phosphorylation of D-glycero-D-manno-heptose 7-phosphate at the C-1 position to selectively form D-glycero-beta-D-manno-heptose-1,7-bisphosphate. Catalyzes the ADP transfer from ATP to D-glycero-beta-D-manno-heptose 1-phosphate, yielding ADP-D-glycero-beta-D-manno-heptose. The polypeptide is Bifunctional protein HldE (Helicobacter pylori (strain J99 / ATCC 700824) (Campylobacter pylori J99)).